We begin with the raw amino-acid sequence, 285 residues long: Bifunctional protein FolD (285 aa).

NADP(+) contacts are provided by residues 165-167 and serine 190; that span reads GRS.

Belongs to the tetrahydrofolate dehydrogenase/cyclohydrolase family. As to quaternary structure, homodimer.

The enzyme catalyses (6R)-5,10-methylene-5,6,7,8-tetrahydrofolate + NADP(+) = (6R)-5,10-methenyltetrahydrofolate + NADPH. It catalyses the reaction (6R)-5,10-methenyltetrahydrofolate + H2O = (6R)-10-formyltetrahydrofolate + H(+). The protein operates within one-carbon metabolism; tetrahydrofolate interconversion. In terms of biological role, catalyzes the oxidation of 5,10-methylenetetrahydrofolate to 5,10-methenyltetrahydrofolate and then the hydrolysis of 5,10-methenyltetrahydrofolate to 10-formyltetrahydrofolate. In Ligilactobacillus salivarius (strain UCC118) (Lactobacillus salivarius), this protein is Bifunctional protein FolD.